We begin with the raw amino-acid sequence, 264 residues long: Small ribosomal subunit protein uS2 (264 aa).

Positions 225–264 (GKKAREERQLAAAKDAAGDAKPEAEEAPVAAEAEEAPAAE) are disordered.

It belongs to the universal ribosomal protein uS2 family.

The chain is Small ribosomal subunit protein uS2 from Corynebacterium glutamicum (strain R).